A 249-amino-acid chain; its full sequence is 5'-nucleotidase SurE (249 aa).

The a divalent metal cation site is built by Asp8, Asp9, Ser39, and Asn91.

Belongs to the SurE nucleotidase family. Requires a divalent metal cation as cofactor.

It is found in the cytoplasm. It carries out the reaction a ribonucleoside 5'-phosphate + H2O = a ribonucleoside + phosphate. Nucleotidase that shows phosphatase activity on nucleoside 5'-monophosphates. In Haemophilus influenzae (strain PittEE), this protein is 5'-nucleotidase SurE.